The sequence spans 291 residues: 33 kDa chaperonin (291 aa).

2 cysteine pairs are disulfide-bonded: Cys-229-Cys-231 and Cys-262-Cys-265.

The protein belongs to the HSP33 family. In terms of processing, under oxidizing conditions two disulfide bonds are formed involving the reactive cysteines. Under reducing conditions zinc is bound to the reactive cysteines and the protein is inactive.

It is found in the cytoplasm. Functionally, redox regulated molecular chaperone. Protects both thermally unfolding and oxidatively damaged proteins from irreversible aggregation. Plays an important role in the bacterial defense system toward oxidative stress. This Vibrio cholerae serotype O1 (strain ATCC 39315 / El Tor Inaba N16961) protein is 33 kDa chaperonin.